Reading from the N-terminus, the 475-residue chain is Sulfate adenylyltransferase subunit 1 (475 aa).

One can recognise a tr-type G domain in the interval 24–240 (KSLLRFLTCG…ESAEVERELE (217 aa)). The G1 stretch occupies residues 33–40 (GSVDDGKS). 33–40 (GSVDDGKS) lines the GTP pocket. Positions 91–95 (GITID) are G2. The interval 112–115 (DTPG) is G3. GTP contacts are provided by residues 112–116 (DTPGH) and 167–170 (NKMD). The G4 stretch occupies residues 167 to 170 (NKMD). Positions 204 to 206 (SAL) are G5.

Belongs to the TRAFAC class translation factor GTPase superfamily. Classic translation factor GTPase family. CysN/NodQ subfamily. In terms of assembly, heterodimer composed of CysD, the smaller subunit, and CysN.

The catalysed reaction is sulfate + ATP + H(+) = adenosine 5'-phosphosulfate + diphosphate. It participates in sulfur metabolism; hydrogen sulfide biosynthesis; sulfite from sulfate: step 1/3. Its function is as follows. With CysD forms the ATP sulfurylase (ATPS) that catalyzes the adenylation of sulfate producing adenosine 5'-phosphosulfate (APS) and diphosphate, the first enzymatic step in sulfur assimilation pathway. APS synthesis involves the formation of a high-energy phosphoric-sulfuric acid anhydride bond driven by GTP hydrolysis by CysN coupled to ATP hydrolysis by CysD. In Aeromonas hydrophila subsp. hydrophila (strain ATCC 7966 / DSM 30187 / BCRC 13018 / CCUG 14551 / JCM 1027 / KCTC 2358 / NCIMB 9240 / NCTC 8049), this protein is Sulfate adenylyltransferase subunit 1.